Here is a 404-residue protein sequence, read N- to C-terminus: Argininosuccinate synthase (404 aa).

ATP-binding positions include 10–18 (AYSGGLDTS) and Ala-37. L-citrulline-binding residues include Tyr-89 and Ser-94. Gly-119 contributes to the ATP binding site. Residues Thr-121, Asn-125, and Asp-126 each coordinate L-aspartate. Asn-125 is a binding site for L-citrulline. 5 residues coordinate L-citrulline: Arg-129, Ser-178, Ser-187, Glu-263, and Tyr-275.

Belongs to the argininosuccinate synthase family. Type 1 subfamily. Homotetramer.

The protein resides in the cytoplasm. The enzyme catalyses L-citrulline + L-aspartate + ATP = 2-(N(omega)-L-arginino)succinate + AMP + diphosphate + H(+). It participates in amino-acid biosynthesis; L-arginine biosynthesis; L-arginine from L-ornithine and carbamoyl phosphate: step 2/3. This chain is Argininosuccinate synthase, found in Photobacterium profundum (strain SS9).